Here is a 308-residue protein sequence, read N- to C-terminus: Taste receptor type 2 member 43 (308 aa).

Residue Met1 is a topological domain, extracellular. The chain crosses the membrane as a helical span at residues 2–22 (ITFLPIIFSILVVFTFVIGNF). The Cytoplasmic segment spans residues 23 to 46 (ANGFIALVNSIEWVKRQKISFADQ). Residues 47 to 67 (ILTALAVSRVGLLWILLLNWY) form a helical membrane-spanning segment. At 68–86 (STVLNPAFYSVEVRTIAYN) the chain is on the extracellular side. A helical membrane pass occupies residues 87-107 (LWAVINHFSNWLATSLSIFYL). Residues 108-126 (LKIANFSNLIFLHLRRRVK) are Cytoplasmic-facing. The chain crosses the membrane as a helical span at residues 127–147 (SVVLVILWGPLLFLVCHLFVV). Topologically, residues 148–178 (NMNEIIQTKEYEGNMTWKSKLRSAMYLSNTT) are extracellular. N-linked (GlcNAc...) asparagine glycans are attached at residues Asn161 and Asn176. A helical transmembrane segment spans residues 179 to 199 (VTILANLVPFILTLISFLLLI). Topologically, residues 200-229 (CSLCKHLKKMQLRDKGSQDPSTKVHIKALQ) are cytoplasmic. The helical transmembrane segment at 230-249 (TVISLSLCAIYFLSIMISSW) threads the bilayer. Residues 250-258 (SLGRVENKA) lie on the Extracellular side of the membrane. A helical membrane pass occupies residues 259-279 (IFMFCKAIRFSYPSAHAFILI). Residues 280–308 (WGNKKLKQTLLSVLWNVRYCVKGQKLQSP) are Cytoplasmic-facing.

The protein belongs to the G-protein coupled receptor T2R family.

The protein resides in the membrane. The protein localises to the cell projection. Its subcellular location is the cilium membrane. In terms of biological role, gustducin-coupled receptor immplicated in the perception of bitter compounds in the oral cavity and the gastrointestinal tract. Signals through PLCB2 and the calcium-regulated cation channel TRPM5. Activated by the sulfonyl amide sweeteners saccharin and acesulfame K. In airway epithelial cells, binding of bitter compounds increases the intracellular calcium ion concentration and stimulates ciliary beat frequency. May act as chemosensory receptors in airway epithelial cells to detect and eliminate potential noxious agents from the airways. In Macaca mulatta (Rhesus macaque), this protein is Taste receptor type 2 member 43 (TAS2R43).